Reading from the N-terminus, the 376-residue chain is Biotin synthase (376 aa).

The Radical SAM core domain maps to 68–292 (NEVQISTLLS…IAVTRICCPS (225 aa)). Residues C83, C87, and C90 each coordinate [4Fe-4S] cluster. Positions 129, 160, 220, and 296 each coordinate [2Fe-2S] cluster.

Belongs to the radical SAM superfamily. Biotin synthase family. As to quaternary structure, homodimer. It depends on [4Fe-4S] cluster as a cofactor. The cofactor is [2Fe-2S] cluster.

The catalysed reaction is (4R,5S)-dethiobiotin + (sulfur carrier)-SH + 2 reduced [2Fe-2S]-[ferredoxin] + 2 S-adenosyl-L-methionine = (sulfur carrier)-H + biotin + 2 5'-deoxyadenosine + 2 L-methionine + 2 oxidized [2Fe-2S]-[ferredoxin]. It participates in cofactor biosynthesis; biotin biosynthesis; biotin from 7,8-diaminononanoate: step 2/2. Functionally, catalyzes the conversion of dethiobiotin (DTB) to biotin by the insertion of a sulfur atom into dethiobiotin via a radical-based mechanism. The polypeptide is Biotin synthase (Psychrobacter cryohalolentis (strain ATCC BAA-1226 / DSM 17306 / VKM B-2378 / K5)).